Here is a 38-residue protein sequence, read N- to C-terminus: Phospholipase A2 1 (38 aa).

Residues Y28, G30, and G32 each contribute to the Ca(2+) site.

This sequence belongs to the phospholipase A2 family. Group I subfamily. Ca(2+) is required as a cofactor. As to expression, expressed by the venom gland.

It localises to the secreted. The enzyme catalyses a 1,2-diacyl-sn-glycero-3-phosphocholine + H2O = a 1-acyl-sn-glycero-3-phosphocholine + a fatty acid + H(+). Functionally, snake venom phospholipase A2 (PLA2) that inhibits neuromuscular transmission by blocking acetylcholine release from the nerve termini. PLA2 catalyzes the calcium-dependent hydrolysis of the 2-acyl groups in 3-sn-phosphoglycerides. The chain is Phospholipase A2 1 from Calliophis bivirgatus (Blue Malaysian coral snake).